The sequence spans 275 residues: Large ribosomal subunit protein uL2 (275 aa).

Disordered stretches follow at residues 1–55 (MGIR…RHRG) and 218–275 (PHVR…RRRR). Residues 259–275 (TRNKKKASSRLIVRRRR) are compositionally biased toward basic residues.

It belongs to the universal ribosomal protein uL2 family. As to quaternary structure, part of the 50S ribosomal subunit. Forms a bridge to the 30S subunit in the 70S ribosome.

Functionally, one of the primary rRNA binding proteins. Required for association of the 30S and 50S subunits to form the 70S ribosome, for tRNA binding and peptide bond formation. It has been suggested to have peptidyltransferase activity; this is somewhat controversial. Makes several contacts with the 16S rRNA in the 70S ribosome. This Crocosphaera subtropica (strain ATCC 51142 / BH68) (Cyanothece sp. (strain ATCC 51142)) protein is Large ribosomal subunit protein uL2.